Reading from the N-terminus, the 195-residue chain is Adenylate kinase (195 aa).

Residue 10–15 (GAGKGT) participates in ATP binding. The NMP stretch occupies residues 30 to 59 (STGDMLRAAVAAGTPVGLKAKAVMDAGGLV). Residues T31, R36, 57 to 59 (GLV), 85 to 88 (GFPR), and Q92 each bind AMP. The LID stretch occupies residues 126-143 (NRAAEAQAKGEAVRKDDD). Position 127 (R127) interacts with ATP. AMP is bound at residue R150. A178 lines the ATP pocket.

It belongs to the adenylate kinase family. As to quaternary structure, monomer.

The protein localises to the cytoplasm. The catalysed reaction is AMP + ATP = 2 ADP. It functions in the pathway purine metabolism; AMP biosynthesis via salvage pathway; AMP from ADP: step 1/1. In terms of biological role, catalyzes the reversible transfer of the terminal phosphate group between ATP and AMP. Plays an important role in cellular energy homeostasis and in adenine nucleotide metabolism. The chain is Adenylate kinase from Xanthobacter autotrophicus (strain ATCC BAA-1158 / Py2).